A 513-amino-acid polypeptide reads, in one-letter code: Putative fucosyltransferase-like protein (513 aa).

Residues 1 to 34 (MGVFSNLRGPRAGATHDEFPATNGSPSSSSSPSS) form a disordered region. At 1–39 (MGVFSNLRGPRAGATHDEFPATNGSPSSSSSPSSSIKRK) the chain is on the cytoplasmic side. Low complexity predominate over residues 25-34 (SPSSSSSPSS). Residues 40 to 60 (LSNLLPLCVALVVIAEIGFLG) traverse the membrane as a helical; Signal-anchor for type II membrane protein segment. The Lumenal segment spans residues 61-513 (RLDKVALVDT…PCAKFEVVFV (453 aa)). Asn348 and Asn493 each carry an N-linked (GlcNAc...) asparagine glycan.

This sequence belongs to the glycosyltransferase 10 family.

The protein localises to the golgi apparatus. It localises to the golgi stack membrane. Its pathway is protein modification; protein glycosylation. Functionally, may be involved in cell wall biosynthesis. May act as a fucosyltransferase. The protein is Putative fucosyltransferase-like protein (FUT12) of Arabidopsis thaliana (Mouse-ear cress).